Reading from the N-terminus, the 917-residue chain is Alanine--tRNA ligase (917 aa).

The Zn(2+) site is built by His-592, His-596, Cys-694, and His-698.

It belongs to the class-II aminoacyl-tRNA synthetase family. The cofactor is Zn(2+).

It localises to the cytoplasm. It catalyses the reaction tRNA(Ala) + L-alanine + ATP = L-alanyl-tRNA(Ala) + AMP + diphosphate. In terms of biological role, catalyzes the attachment of alanine to tRNA(Ala) in a two-step reaction: alanine is first activated by ATP to form Ala-AMP and then transferred to the acceptor end of tRNA(Ala). Also edits incorrectly charged Ser-tRNA(Ala) and Gly-tRNA(Ala) via its editing domain. The chain is Alanine--tRNA ligase from Sorangium cellulosum (strain So ce56) (Polyangium cellulosum (strain So ce56)).